Here is a 224-residue protein sequence, read N- to C-terminus: Ribonuclease T (224 aa).

One can recognise an Exonuclease domain in the interval 32 to 206 (VVVDVETGGF…YDTEKTAELF (175 aa)). 4 residues coordinate Mg(2+): Asp-35, Glu-37, His-193, and Asp-198. His-193 functions as the Proton donor/acceptor in the catalytic mechanism.

It belongs to the RNase T family. As to quaternary structure, homodimer. Requires Mg(2+) as cofactor.

Trims short 3' overhangs of a variety of RNA species, leaving a one or two nucleotide 3' overhang. Responsible for the end-turnover of tRNA: specifically removes the terminal AMP residue from uncharged tRNA (tRNA-C-C-A). Also appears to be involved in tRNA biosynthesis. This Pseudomonas aeruginosa (strain UCBPP-PA14) protein is Ribonuclease T.